Reading from the N-terminus, the 92-residue chain is Small ribosomal subunit protein uS19c (92 aa).

The protein belongs to the universal ribosomal protein uS19 family.

The protein localises to the plastid. It is found in the chloroplast. Functionally, protein S19 forms a complex with S13 that binds strongly to the 16S ribosomal RNA. In Nephroselmis olivacea (Green alga), this protein is Small ribosomal subunit protein uS19c.